The following is a 278-amino-acid chain: Ribosomal RNA small subunit methyltransferase J (278 aa).

S-adenosyl-L-methionine contacts are provided by residues 143 to 144 (ER) and aspartate 197.

This sequence belongs to the methyltransferase superfamily. RsmJ family.

It is found in the cytoplasm. It catalyses the reaction guanosine(1516) in 16S rRNA + S-adenosyl-L-methionine = N(2)-methylguanosine(1516) in 16S rRNA + S-adenosyl-L-homocysteine + H(+). Specifically methylates the guanosine in position 1516 of 16S rRNA. In Marinobacter nauticus (strain ATCC 700491 / DSM 11845 / VT8) (Marinobacter aquaeolei), this protein is Ribosomal RNA small subunit methyltransferase J.